The primary structure comprises 802 residues: DNA mismatch repair protein MutS (802 aa).

Residue 617–624 coordinates ATP; it reads GPNMGGKS.

The protein belongs to the DNA mismatch repair MutS family.

Functionally, this protein is involved in the repair of mismatches in DNA. It is possible that it carries out the mismatch recognition step. This protein has a weak ATPase activity. This chain is DNA mismatch repair protein MutS, found in Buchnera aphidicola subsp. Acyrthosiphon pisum (strain 5A).